The following is a 317-amino-acid chain: Transaldolase (317 aa).

Lys-126 (schiff-base intermediate with substrate) is an active-site residue.

This sequence belongs to the transaldolase family. Type 1 subfamily. Homodimer.

The protein localises to the cytoplasm. The enzyme catalyses D-sedoheptulose 7-phosphate + D-glyceraldehyde 3-phosphate = D-erythrose 4-phosphate + beta-D-fructose 6-phosphate. The protein operates within carbohydrate degradation; pentose phosphate pathway; D-glyceraldehyde 3-phosphate and beta-D-fructose 6-phosphate from D-ribose 5-phosphate and D-xylulose 5-phosphate (non-oxidative stage): step 2/3. Its function is as follows. Transaldolase is important for the balance of metabolites in the pentose-phosphate pathway. The sequence is that of Transaldolase from Burkholderia thailandensis (strain ATCC 700388 / DSM 13276 / CCUG 48851 / CIP 106301 / E264).